Reading from the N-terminus, the 552-residue chain is Glucose-6-phosphate isomerase (552 aa).

The Proton donor role is filled by glutamate 357. Catalysis depends on residues histidine 388 and lysine 516. The tract at residues 525–552 (ELASTKPPKHDSSTNALIERYRTRGCRS) is disordered.

The protein belongs to the GPI family.

The protein resides in the cytoplasm. It carries out the reaction alpha-D-glucose 6-phosphate = beta-D-fructose 6-phosphate. The protein operates within carbohydrate biosynthesis; gluconeogenesis. It participates in carbohydrate degradation; glycolysis; D-glyceraldehyde 3-phosphate and glycerone phosphate from D-glucose: step 2/4. In terms of biological role, catalyzes the reversible isomerization of glucose-6-phosphate to fructose-6-phosphate. This chain is Glucose-6-phosphate isomerase, found in Laribacter hongkongensis (strain HLHK9).